The primary structure comprises 572 residues: Proline--tRNA ligase (572 aa).

Belongs to the class-II aminoacyl-tRNA synthetase family. ProS type 1 subfamily. In terms of assembly, homodimer.

The protein resides in the cytoplasm. The enzyme catalyses tRNA(Pro) + L-proline + ATP = L-prolyl-tRNA(Pro) + AMP + diphosphate. Functionally, catalyzes the attachment of proline to tRNA(Pro) in a two-step reaction: proline is first activated by ATP to form Pro-AMP and then transferred to the acceptor end of tRNA(Pro). As ProRS can inadvertently accommodate and process non-cognate amino acids such as alanine and cysteine, to avoid such errors it has two additional distinct editing activities against alanine. One activity is designated as 'pretransfer' editing and involves the tRNA(Pro)-independent hydrolysis of activated Ala-AMP. The other activity is designated 'posttransfer' editing and involves deacylation of mischarged Ala-tRNA(Pro). The misacylated Cys-tRNA(Pro) is not edited by ProRS. The protein is Proline--tRNA ligase of Escherichia coli O9:H4 (strain HS).